Here is a 62-residue protein sequence, read N- to C-terminus: GLAYDISDDQQDITRMGINPIMMSAGELESGNAGEPAKMCCLFINDLDAGAGRIGVCTGIFR.

Belongs to the RuBisCO activase family.

Its subcellular location is the plastid. It is found in the chloroplast stroma. Activation of RuBisCO (ribulose-1,5-bisphosphate carboxylase/oxygenase; EC 4.1.1.39) involves the ATP-dependent carboxylation of the epsilon-amino group of lysine leading to a carbamate structure. The sequence is that of Ribulose bisphosphate carboxylase/oxygenase activase, chloroplastic from Vitis sp. (Grape).